Here is a 66-residue protein sequence, read N- to C-terminus: Alpha-like toxin BeM9 (66 aa).

Residues 2–66 form the LCN-type CS-alpha/beta domain; the sequence is RDAYIAKPHN…VPIRIPGKCH (65 aa). 4 disulfide bridges follow: Cys12/Cys65, Cys16/Cys38, Cys24/Cys48, and Cys28/Cys50.

Belongs to the long (4 C-C) scorpion toxin superfamily. Sodium channel inhibitor family. Alpha subfamily. In terms of tissue distribution, expressed by the venom gland.

It is found in the secreted. In terms of biological role, alpha toxins bind voltage-independently at site-3 of sodium channels (Nav) and inhibit the inactivation of the activated channels, thereby blocking neuronal transmission. This toxin is active on both mammals and insects, since it inhibits inactivation of rNav1.4/SCN4A, hNav1.5/SCN5A, mNav1.6/SCN8A and insect BgNav1 and DmNav1 channels. In vivo, it shows paralytic activity in mice. This is Alpha-like toxin BeM9 from Mesobuthus eupeus (Lesser Asian scorpion).